A 255-amino-acid polypeptide reads, in one-letter code: Glutamate racemase (255 aa).

Residues 7-8 and 39-40 contribute to the substrate site; these read DS and YG. Cys-70 acts as the Proton donor/acceptor in catalysis. 71–72 contacts substrate; that stretch reads NT. Cys-181 (proton donor/acceptor) is an active-site residue. 182–183 contributes to the substrate binding site; the sequence is TH.

The protein belongs to the aspartate/glutamate racemases family. Homodimer.

The enzyme catalyses L-glutamate = D-glutamate. It functions in the pathway cell wall biogenesis; peptidoglycan biosynthesis. Functionally, provides the (R)-glutamate required for cell wall biosynthesis. The chain is Glutamate racemase from Helicobacter pylori (strain J99 / ATCC 700824) (Campylobacter pylori J99).